Here is a 353-residue protein sequence, read N- to C-terminus: Methylthioribose-1-phosphate isomerase (353 aa).

The active-site Proton donor is the Asp-241.

It belongs to the eIF-2B alpha/beta/delta subunits family. MtnA subfamily.

The protein resides in the cytoplasm. It localises to the nucleus. It catalyses the reaction 5-(methylsulfanyl)-alpha-D-ribose 1-phosphate = 5-(methylsulfanyl)-D-ribulose 1-phosphate. It functions in the pathway amino-acid biosynthesis; L-methionine biosynthesis via salvage pathway; L-methionine from S-methyl-5-thio-alpha-D-ribose 1-phosphate: step 1/6. Its function is as follows. Catalyzes the interconversion of methylthioribose-1-phosphate (MTR-1-P) into methylthioribulose-1-phosphate (MTRu-1-P). This Danio rerio (Zebrafish) protein is Methylthioribose-1-phosphate isomerase (mri1).